A 215-amino-acid polypeptide reads, in one-letter code: Small ribosomal subunit protein eS1 (215 aa).

The protein belongs to the eukaryotic ribosomal protein eS1 family.

The sequence is that of Small ribosomal subunit protein eS1 from Halorubrum lacusprofundi (strain ATCC 49239 / DSM 5036 / JCM 8891 / ACAM 34).